The sequence spans 245 residues: 14-3-3 protein theta (245 aa).

Position 1 is an N-acetylmethionine (Met-1). The residue at position 3 (Lys-3) is an N6-acetyllysine. At Lys-49 the chain carries N6-acetyllysine; alternate. Lys-49 is covalently cross-linked (Glycyl lysine isopeptide (Lys-Gly) (interchain with G-Cter in SUMO2); alternate). The residue at position 68 (Lys-68) is an N6-acetyllysine. Tyr-82 carries the 3'-nitrotyrosine modification. The residue at position 92 (Ser-92) is a Phosphoserine. Position 104 is a 3'-nitrotyrosine (Tyr-104). Lys-115 bears the N6-acetyllysine mark. Ser-232 is subject to Phosphoserine; by CK1.

Belongs to the 14-3-3 family. As to quaternary structure, homodimer. Interacts with CDK16. Interacts with RGS7 (phosphorylated form). Interacts with SSH1. Interacts with CDKN1B ('Thr-198' phosphorylated form); the interaction translocates CDKN1B to the cytoplasm. Interacts with GAB2. Interacts with the 'Ser-241' phosphorylated form of PDPK1. Interacts with the 'Thr-369' phosphorylated form of DAPK2. Interacts with PI4KB, TBC1D22A and TBC1D22B. Interacts with SLITRK1. Interacts with RIPOR2. Interacts with INAVA; the interaction increases upon PRR (pattern recognition receptor) stimulation and is required for cellular signaling pathway activation and cytokine secretion. Interacts with MARK2, MARK3 and MARK4. Interacts with MEFV.

The protein resides in the cytoplasm. Adapter protein implicated in the regulation of a large spectrum of both general and specialized signaling pathways. Binds to a large number of partners, usually by recognition of a phosphoserine or phosphothreonine motif. Binding generally results in the modulation of the activity of the binding partner. Negatively regulates the kinase activity of PDPK1. The sequence is that of 14-3-3 protein theta (YWHAQ) from Bos taurus (Bovine).